The following is a 347-amino-acid chain: NADH-ubiquinone oxidoreductase chain 2 (347 aa).

Helical transmembrane passes span 3–23 (PPIL…VLTS), 25–45 (HWML…PILM), 59–79 (YFLM…INLL), 96–116 (TLMT…FWVP), 122–142 (ISLS…LSVL), 153–173 (LLLL…LNQT), 178–198 (ILAY…IYNP), 200–220 (MMLL…MLFM), 237–257 (MPLI…LPPL), 274–294 (EMII…YFYM), and 325–345 (FLPP…IISI).

Belongs to the complex I subunit 2 family. As to quaternary structure, core subunit of respiratory chain NADH dehydrogenase (Complex I) which is composed of 45 different subunits. Interacts with TMEM242.

Its subcellular location is the mitochondrion inner membrane. The enzyme catalyses a ubiquinone + NADH + 5 H(+)(in) = a ubiquinol + NAD(+) + 4 H(+)(out). Functionally, core subunit of the mitochondrial membrane respiratory chain NADH dehydrogenase (Complex I) which catalyzes electron transfer from NADH through the respiratory chain, using ubiquinone as an electron acceptor. Essential for the catalytic activity and assembly of complex I. This chain is NADH-ubiquinone oxidoreductase chain 2, found in Paradoxurus hermaphroditus (Asian palm civet).